The sequence spans 1415 residues: Uveal autoantigen with coiled-coil domains and ankyrin repeats (1415 aa).

5 ANK repeats span residues glutamate 69 to threonine 98, alanine 102 to histidine 131, glutamine 135 to alanine 164, aspartate 168 to serine 197, and glutamine 201 to leucine 230. Positions valine 288–lysine 376 form a coiled coil. An ANK 6 repeat occupies glutamate 617–valine 646. The stretch at threonine 759–alanine 1381 forms a coiled coil. Lysine 1034 participates in a covalent cross-link: Glycyl lysine isopeptide (Lys-Gly) (interchain with G-Cter in SUMO2). Over residues leucine 1186 to serine 1201 the composition is skewed to basic and acidic residues. The tract at residues leucine 1186–serine 1205 is disordered.

Component of the apoptosome complex, composed of APAF1, pro-caspase-9 and UACA. In the complex, it probably interacts directly with APAF1. Interacts with LGALS3, ARF6 and ACTB. Interacts with RAB39A. Highly expressed in adrenal, testis, kidney and large intestine.

The protein localises to the nucleus. The protein resides in the cytoplasm. It is found in the cytoskeleton. In terms of biological role, regulates APAF1 expression and plays an important role in the regulation of stress-induced apoptosis. Promotes apoptosis by regulating three pathways, apoptosome up-regulation, LGALS3/galectin-3 down-regulation and NF-kappa-B inactivation. Regulates the redistribution of APAF1 into the nucleus after proapoptotic stress. Down-regulates the expression of LGALS3 by inhibiting NFKB1. Modulates isoactin dynamics to regulate the morphological alterations required for cell growth and motility. Interaction with ARF6 may modulate cell shape and motility after injury. May be involved in multiple neurite formation. The chain is Uveal autoantigen with coiled-coil domains and ankyrin repeats (UACA) from Canis lupus familiaris (Dog).